Here is a 359-residue protein sequence, read N- to C-terminus: Holliday junction branch migration complex subunit RuvB (359 aa).

The tract at residues 1 to 22 (MAIVSSNAEPSKGAPRPKPSRV) is disordered. A large ATPase domain (RuvB-L) region spans residues 13–204 (GAPRPKPSRV…FGLIQRLEFY (192 aa)). 9 residues coordinate ATP: Leu43, Arg44, Gly85, Lys88, Thr89, Thr90, Arg194, Tyr204, and Arg241. Thr89 contacts Mg(2+). The small ATPAse domain (RuvB-S) stretch occupies residues 205–276 (GQEDLQAIVM…LVDEALTLHR (72 aa)). The head domain (RuvB-H) stretch occupies residues 279 to 359 (GKGLDASDRR…GWPADEGDAA (81 aa)). Positions 334 and 339 each coordinate DNA.

Belongs to the RuvB family. In terms of assembly, homohexamer. Forms an RuvA(8)-RuvB(12)-Holliday junction (HJ) complex. HJ DNA is sandwiched between 2 RuvA tetramers; dsDNA enters through RuvA and exits via RuvB. An RuvB hexamer assembles on each DNA strand where it exits the tetramer. Each RuvB hexamer is contacted by two RuvA subunits (via domain III) on 2 adjacent RuvB subunits; this complex drives branch migration. In the full resolvosome a probable DNA-RuvA(4)-RuvB(12)-RuvC(2) complex forms which resolves the HJ.

Its subcellular location is the cytoplasm. It carries out the reaction ATP + H2O = ADP + phosphate + H(+). Its function is as follows. The RuvA-RuvB-RuvC complex processes Holliday junction (HJ) DNA during genetic recombination and DNA repair, while the RuvA-RuvB complex plays an important role in the rescue of blocked DNA replication forks via replication fork reversal (RFR). RuvA specifically binds to HJ cruciform DNA, conferring on it an open structure. The RuvB hexamer acts as an ATP-dependent pump, pulling dsDNA into and through the RuvAB complex. RuvB forms 2 homohexamers on either side of HJ DNA bound by 1 or 2 RuvA tetramers; 4 subunits per hexamer contact DNA at a time. Coordinated motions by a converter formed by DNA-disengaged RuvB subunits stimulates ATP hydrolysis and nucleotide exchange. Immobilization of the converter enables RuvB to convert the ATP-contained energy into a lever motion, pulling 2 nucleotides of DNA out of the RuvA tetramer per ATP hydrolyzed, thus driving DNA branch migration. The RuvB motors rotate together with the DNA substrate, which together with the progressing nucleotide cycle form the mechanistic basis for DNA recombination by continuous HJ branch migration. Branch migration allows RuvC to scan DNA until it finds its consensus sequence, where it cleaves and resolves cruciform DNA. The chain is Holliday junction branch migration complex subunit RuvB from Synechococcus sp. (strain CC9311).